We begin with the raw amino-acid sequence, 483 residues long: RNA-binding protein Nova-1 (483 aa).

The disordered stretch occupies residues 1–44 (MMAAAPIQQNGTHTGVPIDLDPPDSRKRPLEAPPEAGSTKRTNT). The short motif at 27-43 (KRPLEAPPEAGSTKRTN) is the Bipartite nuclear localization signal element. 3 consecutive KH domains span residues 49–116 (QYFL…HGFI), 147–213 (IKQV…VELI), and 397–464 (KDVV…QYLI). Positions 395–479 (GSKDVVEIAV…YEQGVRAANP (85 aa)) are required for RNA binding.

As to quaternary structure, interacts with PTBP2; the interaction is direct.

It localises to the nucleus. Functionally, functions to regulate alternative splicing in neurons by binding pre-mRNA in a sequence-specific manner to activate exon inclusion or exclusion. It binds specifically to the sequences 5'-YCAY-3' and regulates splicing in only a subset of regulated exons. Binding to an exonic 5'-YCAY-3' cluster changes the protein complexes assembled on pre-mRNA, blocking U1 snRNP binding and exon inclusion, whereas binding to an intronic 5'-YCAY-3' cluster enhances spliceosome assembly and exon inclusion. Binding to 5'-YCAY-3' clusters results in a local and asymmetric action to regulate spliceosome assembly and alternative splicing in neurons. Binding to an exonic 5'-YCAY-3' cluster changed the protein complexes assembled on pre-mRNA, blocking U1 snRNP (small nuclear ribonucleoprotein) binding and exon inclusion, whereas binding to an intronic 5'-YCAY-3' cluster enhanced spliceosome assembly and exon inclusion. With NOVA1, they perform unique biological functions in different brain areas and cell types. Autoregulates its own expression by acting as a splicing repressor. Acts to activate the inclusion of exon E3A in the glycine receptor alpha-2 chain and of exon E9 in gamma-aminobutyric-acid receptor gamma-2 subunit via a distal downstream UCAU-rich intronic splicing enhancer. Acts to regulate a novel glycine receptor alpha-2 chain splice variant (alpha-2N) in developing spinal cord. This is RNA-binding protein Nova-1 (NOVA1) from Macaca fascicularis (Crab-eating macaque).